A 124-amino-acid chain; its full sequence is uncharacterized protein (124 aa).

It is found in the cytoplasm. It localises to the nucleus. This is an uncharacterized protein from Schizosaccharomyces pombe (strain 972 / ATCC 24843) (Fission yeast).